Consider the following 445-residue polypeptide: Methylthioribose-1-phosphate isomerase (445 aa).

Asp-286 serves as the catalytic Proton donor.

This sequence belongs to the eIF-2B alpha/beta/delta subunits family. MtnA subfamily.

The protein resides in the cytoplasm. It localises to the nucleus. It catalyses the reaction 5-(methylsulfanyl)-alpha-D-ribose 1-phosphate = 5-(methylsulfanyl)-D-ribulose 1-phosphate. It functions in the pathway amino-acid biosynthesis; L-methionine biosynthesis via salvage pathway; L-methionine from S-methyl-5-thio-alpha-D-ribose 1-phosphate: step 1/6. Functionally, catalyzes the interconversion of methylthioribose-1-phosphate (MTR-1-P) into methylthioribulose-1-phosphate (MTRu-1-P). This Sclerotinia sclerotiorum (strain ATCC 18683 / 1980 / Ss-1) (White mold) protein is Methylthioribose-1-phosphate isomerase (mri1).